The following is a 1187-amino-acid chain: uncharacterized protein (1187 aa).

5 disordered regions span residues 302 to 405 (QKSQ…KPVG), 419 to 451 (QAFSPLLSSAGPGSPAAETKTEETTLGHGRASK), 511 to 551 (KAPG…LRLE), 1095 to 1134 (KSQRTPQGEQSRNMWAGLLSPEPGQSGDTEEVRGTPKLPD), and 1148 to 1187 (PHLPKQSKASRPTGGSFSSEGTGSQTSLEDSPHTSPPASL). Positions 321-333 (LPLSGPAGAPPLG) are enriched in low complexity. The segment covering 352 to 361 (SRRKARHKAS) has biased composition (basic residues). Low complexity-rich tracts occupy residues 422–435 (SPLLSSAGPGSPAA) and 517–534 (GTTLPTTSGSGPLSGEPP). Residues 1096–1107 (SQRTPQGEQSRN) are compositionally biased toward polar residues. Low complexity predominate over residues 1160 to 1174 (TGGSFSSEGTGSQTS).

This is an uncharacterized protein from Mus musculus (Mouse).